The primary structure comprises 354 residues: MSIEVRGLSKRFGAFRALDEVSLHIETGELVALLGPSGCGKTTLLRIIAGLESADAGSVLFAGEDATEVDVRQRQVGFVFQHYALFKHMTVFENVAFGLRVRHRSQRPSEARIRAKVLDLLGLVQLDWLADRYPAQLSGGQRQRIALARALAVEPRVLLLDEPFGALDAKVRKELRRWLRRLHDELHVASVFVTHDQEEALEVADRVVLMNAGRIEQVGSPREVWERPATPFVYGFLGDVNQLHGHATRGVWRLGEVALPAPDLPEADNQRAIAYVRPHDIDLARAGTAAPGIPVRLNHVYLAGPSAYLELARQDDQAIIEAQVPEPLFRSLGLKEGEALLAQPRRARVFAVQP.

Residues 3-237 enclose the ABC transporter domain; it reads IEVRGLSKRF…PATPFVYGFL (235 aa). Position 35-42 (35-42) interacts with ATP; that stretch reads GPSGCGKT.

Belongs to the ABC transporter superfamily. Sulfate/tungstate importer (TC 3.A.1.6) family. The complex is composed of two ATP-binding proteins (CysA), two transmembrane proteins (CysT and CysW) and a solute-binding protein (CysP).

The protein resides in the cell inner membrane. The catalysed reaction is sulfate(out) + ATP + H2O = sulfate(in) + ADP + phosphate + H(+). The enzyme catalyses thiosulfate(out) + ATP + H2O = thiosulfate(in) + ADP + phosphate + H(+). Its function is as follows. Part of the ABC transporter complex CysAWTP involved in sulfate/thiosulfate import. Responsible for energy coupling to the transport system. The chain is Sulfate/thiosulfate import ATP-binding protein CysA from Bordetella parapertussis (strain 12822 / ATCC BAA-587 / NCTC 13253).